The sequence spans 256 residues: Phosphatidylglycerol--prolipoprotein diacylglyceryl transferase (256 aa).

Helical transmembrane passes span 19–39 (VHWY…LGYW), 56–76 (LIFY…MLFY), and 91–111 (IWEG…AAWL). An a 1,2-diacyl-sn-glycero-3-phospho-(1'-sn-glycerol)-binding site is contributed by Arg139. A helical transmembrane segment spans residues 231-251 (FGWLTMGQVLSIPMLLIGIWL).

Belongs to the Lgt family.

The protein resides in the cell inner membrane. It catalyses the reaction L-cysteinyl-[prolipoprotein] + a 1,2-diacyl-sn-glycero-3-phospho-(1'-sn-glycerol) = an S-1,2-diacyl-sn-glyceryl-L-cysteinyl-[prolipoprotein] + sn-glycerol 1-phosphate + H(+). The protein operates within protein modification; lipoprotein biosynthesis (diacylglyceryl transfer). Its function is as follows. Catalyzes the transfer of the diacylglyceryl group from phosphatidylglycerol to the sulfhydryl group of the N-terminal cysteine of a prolipoprotein, the first step in the formation of mature lipoproteins. This chain is Phosphatidylglycerol--prolipoprotein diacylglyceryl transferase, found in Legionella pneumophila (strain Paris).